A 414-amino-acid chain; its full sequence is Gamma-glutamyl phosphate reductase (414 aa).

The protein belongs to the gamma-glutamyl phosphate reductase family.

Its subcellular location is the cytoplasm. It catalyses the reaction L-glutamate 5-semialdehyde + phosphate + NADP(+) = L-glutamyl 5-phosphate + NADPH + H(+). The protein operates within amino-acid biosynthesis; L-proline biosynthesis; L-glutamate 5-semialdehyde from L-glutamate: step 2/2. In terms of biological role, catalyzes the NADPH-dependent reduction of L-glutamate 5-phosphate into L-glutamate 5-semialdehyde and phosphate. The product spontaneously undergoes cyclization to form 1-pyrroline-5-carboxylate. This is Gamma-glutamyl phosphate reductase from Geobacillus kaustophilus (strain HTA426).